We begin with the raw amino-acid sequence, 158 residues long: uncharacterized protein (158 aa).

One can recognise an HTH hxlR-type domain in the interval 13 to 110; sequence ESVGRALELV…WGDEYLPRPE (98 aa).

This is an uncharacterized protein from Mycobacterium tuberculosis (strain CDC 1551 / Oshkosh).